Consider the following 488-residue polypeptide: Capsid protein (488 aa).

The disordered stretch occupies residues Glu79–Lys142. The span at Thr80–Phe93 shows a compositional bias: acidic residues. Residues Glu94–Tyr130 are compositionally biased toward basic and acidic residues. The Nuclear localization signal motif lies at Arg121–Lys124. The CCHC-type; degenerate zinc finger occupies Cys411 to Asn428. The segment at Tyr464 to Asp488 is disordered. Residues Lys465–Asp488 show a composition bias toward acidic residues.

Belongs to the caulimoviridae capsid protein family. Interacts (via nuclear localization signal) with host importin alpha.

It is found in the virion. Its subcellular location is the host nucleus. Functionally, self assembles to form an icosahedral capsid, about 50 nm in diameter, nm, composed of 420 subunits of the viral capsid protein. The capsid encapsulates the genomic dsDNA. Following virus entry into host cell, provides nuclear import of the viral genome. Virus particles do not enter the nucleus, but dock at the nuclear membrane through the interaction with host importins. The polypeptide is Capsid protein (Arabidopsis thaliana (Mouse-ear cress)).